The sequence spans 141 residues: 16 kDa protein (141 aa).

A disordered region spans residues 95 to 116 (ESSSATRKKSHNSKNSKKKFKE). Over residues 100–113 (TRKKSHNSKNSKKK) the composition is skewed to basic residues.

This Tobacco rattle virus (strain PSG) protein is 16 kDa protein.